A 227-amino-acid polypeptide reads, in one-letter code: Cytidylate kinase (227 aa).

Residue 12 to 20 coordinates ATP; the sequence is GPSGAGKGT.

It belongs to the cytidylate kinase family. Type 1 subfamily.

It is found in the cytoplasm. The enzyme catalyses CMP + ATP = CDP + ADP. The catalysed reaction is dCMP + ATP = dCDP + ADP. The chain is Cytidylate kinase from Salmonella paratyphi B (strain ATCC BAA-1250 / SPB7).